The sequence spans 166 residues: Cofilin-2 (166 aa).

Residues 4-153 (GVTVNDEVIK…KDRSTLGEKL (150 aa)) form the ADF-H domain. Ser24 is subject to Phosphoserine. The Nuclear localization signal signature appears at 30–34 (KKRKK).

The protein belongs to the actin-binding proteins ADF family. In terms of processing, the phosphorylation of Ser-24 may prevent recognition of the nuclear localization signal. As to expression, widely distributed in various tissues.

The protein resides in the nucleus matrix. Its subcellular location is the cytoplasm. It localises to the cytoskeleton. In terms of biological role, controls reversibly actin polymerization and depolymerization in a pH-sensitive manner. It has the ability to bind G- and F-actin in a 1:1 ratio of cofilin to actin. It is the major component of intranuclear and cytoplasmic actin rods. In Gallus gallus (Chicken), this protein is Cofilin-2 (CFL2).